Reading from the N-terminus, the 332-residue chain is T-cell surface glycoprotein CD1c1 (332 aa).

The N-terminal stretch at methionine 1–isoleucine 17 is a signal peptide. Over threonine 18 to serine 300 the chain is Extracellular. N-linked (GlcNAc...) asparagine glycans are attached at residues asparagine 25, asparagine 38, asparagine 75, and asparagine 146. Disulfide bonds link cysteine 120–cysteine 184 and cysteine 224–cysteine 279. One can recognise an Ig-like domain in the interval proline 205–isoleucine 292. The helical transmembrane segment at valine 301–leucine 321 threads the bilayer. Topologically, residues tyrosine 322 to glutamine 332 are cytoplasmic.

As to quaternary structure, heterodimer with B2M (beta-2-microglobulin).

The protein localises to the cell membrane. Its subcellular location is the endosome membrane. Its function is as follows. Antigen-presenting protein that binds self and non-self lipid and glycolipid antigens and presents them to T-cell receptors on natural killer T-cells. This chain is T-cell surface glycoprotein CD1c1 (CD1C1), found in Cavia porcellus (Guinea pig).